Reading from the N-terminus, the 255-residue chain is 1-(5-phosphoribosyl)-5-[(5-phosphoribosylamino)methylideneamino] imidazole-4-carboxamide isomerase (255 aa).

D8 acts as the Proton acceptor in catalysis. Catalysis depends on D129, which acts as the Proton donor.

This sequence belongs to the HisA/HisF family.

The protein localises to the cytoplasm. The catalysed reaction is 1-(5-phospho-beta-D-ribosyl)-5-[(5-phospho-beta-D-ribosylamino)methylideneamino]imidazole-4-carboxamide = 5-[(5-phospho-1-deoxy-D-ribulos-1-ylimino)methylamino]-1-(5-phospho-beta-D-ribosyl)imidazole-4-carboxamide. It participates in amino-acid biosynthesis; L-histidine biosynthesis; L-histidine from 5-phospho-alpha-D-ribose 1-diphosphate: step 4/9. In Prochlorococcus marinus (strain MIT 9303), this protein is 1-(5-phosphoribosyl)-5-[(5-phosphoribosylamino)methylideneamino] imidazole-4-carboxamide isomerase.